A 1178-amino-acid polypeptide reads, in one-letter code: Niemann-Pick type C1-related protein (1178 aa).

Residue asparagine 41 is glycosylated (N-linked (GlcNAc...) asparagine). 2 helical membrane passes run 157–177 (PWLF…GIFL) and 412–432 (VVEW…TSVV). Residues 414-570 (EWLRLCAAVL…LTFFLAGLSL (157 aa)) enclose the SSD domain. Asparagine 433 carries an N-linked (GlcNAc...) asparagine glycan. A run of 4 helical transmembrane segments spans residues 448–468 (GALA…LCGV), 478–498 (PFLA…AYSL), 516–536 (AGLS…IGAL), and 545–565 (FCII…TFFL). Asparagine 621 carries N-linked (GlcNAc...) asparagine glycosylation. The helical transmembrane segment at 789–809 (ATVLVIFAAVTALAIYGATTL) threads the bilayer. Residues asparagine 917 and asparagine 943 are each glycosylated (N-linked (GlcNAc...) asparagine). Transmembrane regions (helical) follow at residues 986–1006 (FTLT…LLLI), 1013–1033 (IIVV…MALI), 1037–1057 (LSMI…DFTI), 1080–1100 (IVMG…ILAL), and 1114–1134 (MMFM…PVVL).

It belongs to the patched family.

Its subcellular location is the inner membrane complex. The enzyme catalyses cholesterol(in) = cholesterol(out). In terms of biological role, likely facilitates the efflux of cholesterol and gangliosides from membranes. Plays a role in the regulation of lipid homeostasis. This Toxoplasma gondii (strain ATCC 50611 / Me49) protein is Niemann-Pick type C1-related protein.